A 219-amino-acid chain; its full sequence is 2,3-bisphosphoglycerate-dependent phosphoglycerate mutase 2 (219 aa).

Residues 8-15, 21-22, R58, 85-88, K96, 112-113, and 156-157 contribute to the substrate site; these read RHGQSIWN, TG, ERHY, RR, and GN. Residue H9 is the Tele-phosphohistidine intermediate of the active site. The active-site Proton donor/acceptor is E85.

This sequence belongs to the phosphoglycerate mutase family. BPG-dependent PGAM subfamily.

It catalyses the reaction (2R)-2-phosphoglycerate = (2R)-3-phosphoglycerate. It functions in the pathway carbohydrate degradation; glycolysis; pyruvate from D-glyceraldehyde 3-phosphate: step 3/5. In terms of biological role, catalyzes the interconversion of 2-phosphoglycerate and 3-phosphoglycerate. The chain is 2,3-bisphosphoglycerate-dependent phosphoglycerate mutase 2 from Gloeobacter violaceus (strain ATCC 29082 / PCC 7421).